A 400-amino-acid chain; its full sequence is Nicotinate phosphoribosyltransferase (400 aa).

The residue at position 220 (His-220) is a Phosphohistidine; by autocatalysis.

The protein belongs to the NAPRTase family. Post-translationally, transiently phosphorylated on a His residue during the reaction cycle. Phosphorylation strongly increases the affinity for substrates and increases the rate of nicotinate D-ribonucleotide production. Dephosphorylation regenerates the low-affinity form of the enzyme, leading to product release.

It catalyses the reaction nicotinate + 5-phospho-alpha-D-ribose 1-diphosphate + ATP + H2O = nicotinate beta-D-ribonucleotide + ADP + phosphate + diphosphate. It participates in cofactor biosynthesis; NAD(+) biosynthesis; nicotinate D-ribonucleotide from nicotinate: step 1/1. In terms of biological role, catalyzes the synthesis of beta-nicotinate D-ribonucleotide from nicotinate and 5-phospho-D-ribose 1-phosphate at the expense of ATP. This Enterobacter sp. (strain 638) protein is Nicotinate phosphoribosyltransferase.